The chain runs to 456 residues: Probable galactarate/D-glucarate transporter GudP (456 aa).

10 consecutive transmembrane segments (helical) span residues 11–31 (YLIL…RATI), 51–71 (YIFS…GWLL), 78–96 (KVYA…LQGY), 102–119 (ISTA…VGLA), 246–266 (IYLG…WFPV), 280–300 (GIIA…GGVI), 317–337 (TPIV…YVDA), 341–361 (VVCF…GWAV), 381–401 (FGNL…AATG), and 408–428 (SSWV…VGEI).

It belongs to the major facilitator superfamily. Phthalate permease family.

Its subcellular location is the cell inner membrane. The catalysed reaction is galactarate(in) + H(+)(in) = galactarate(out) + H(+)(out). It carries out the reaction D-glucarate(in) + H(+)(in) = D-glucarate(out) + H(+)(out). Functionally, probably involved in the uptake of galactarate and/or D-glucarate. This Pseudomonas putida (Arthrobacter siderocapsulatus) protein is Probable galactarate/D-glucarate transporter GudP (gudP).